The chain runs to 240 residues: Large ribosomal subunit protein uL2 (240 aa).

The segment covering 1-11 (MGKRLISQNRG) has biased composition (polar residues). Disordered regions lie at residues 1-28 (MGKRLISQNRGRGTPKYRSPTHKRKGAV) and 206-240 (GGGRHQHLGKPSSVSRHTSPGRKVGHIASRRTGRK). Basic residues-rich tracts occupy residues 13 to 28 (GTPKYRSPTHKRKGAV) and 224 to 240 (SPGRKVGHIASRRTGRK).

It belongs to the universal ribosomal protein uL2 family. Part of the 50S ribosomal subunit. Forms a bridge to the 30S subunit in the 70S ribosome.

In terms of biological role, one of the primary rRNA binding proteins. Required for association of the 30S and 50S subunits to form the 70S ribosome, for tRNA binding and peptide bond formation. It has been suggested to have peptidyltransferase activity; this is somewhat controversial. Makes several contacts with the 16S rRNA in the 70S ribosome. This chain is Large ribosomal subunit protein uL2, found in Methanococcus maripaludis (strain C7 / ATCC BAA-1331).